The chain runs to 161 residues: Nucleotide-binding protein Dtpsy_2240 (161 aa).

Belongs to the YajQ family.

Its function is as follows. Nucleotide-binding protein. The protein is Nucleotide-binding protein Dtpsy_2240 of Acidovorax ebreus (strain TPSY) (Diaphorobacter sp. (strain TPSY)).